A 637-amino-acid polypeptide reads, in one-letter code: Anthranilate synthase, phenazine specific (637 aa).

The segment at 1-434 (MSQTAAHLME…QREQIQADFS (434 aa)) is anthranilate synthase component I. The 192-residue stretch at 437-628 (QVLIVDAEDT…LRHALIHTPV (192 aa)) folds into the Glutamine amidotransferase type-1 domain. Active-site for GATase activity residues include Cys-517, His-602, and Glu-604.

It catalyses the reaction chorismate + L-glutamine = anthranilate + pyruvate + L-glutamate + H(+). It participates in antibiotic biosynthesis; phenazine biosynthesis. In terms of biological role, involved in the biosynthesis of the antibiotic, phenazine, a nitrogen-containing heterocyclic molecule having important roles in virulence, competition and biological control. This Pseudomonas chlororaphis (Pseudomonas aureofaciens) protein is Anthranilate synthase, phenazine specific (phzB).